The primary structure comprises 406 residues: CMP-sialic acid transporter 2 (406 aa).

The Cytoplasmic segment spans residues 1-41 (MKNGMAECSVCRSRLVSPSSKAISRAYDNYNYKIRVSSKQR). A helical transmembrane segment spans residues 42–62 (ALNVFLVVGDCMLVGLQPVLV). Topologically, residues 63–75 (YMSKVDGKFNFSP) are lumenal. The chain crosses the membrane as a helical span at residues 76-96 (ISVNFLTEIAKVIFAMVMLLF). At 97-148 (QARHQKVGEKPLLSLSTFVQAARNNMLLAVPAGLYAINNYLKFTMQLYFNPA) the chain is on the cytoplasmic side. The chain crosses the membrane as a helical span at residues 149 to 169 (TVKMLSNLKVLVIAVLLKMIM). Residues 170-172 (KRR) are Lumenal-facing. Residues 173–193 (FSIIQWEALALLLIGISINQL) form a helical membrane-spanning segment. Over 194 to 201 (RSLPEGAT) the chain is Cytoplasmic. Residues 202–222 (TVAVPIATGAYICTFIFVTVP) form a helical membrane-spanning segment. Residues 223–245 (SLASVYNEYALKSQYDTSIYLQN) are Lumenal-facing. A helical membrane pass occupies residues 246–266 (LFLYGYGAIFNFLGILGTVIY). The Cytoplasmic segment spans residues 267-282 (KGPGSFDILQGHSRAT). Residues 283 to 303 (MFLILNNAAQGILSSFFFKYA) traverse the membrane as a helical segment. The Lumenal portion of the chain corresponds to 304 to 323 (DTILKKYSSTVATIFTGIAS). The helical transmembrane segment at 324–344 (AALFGHILTMNFLLGISIVFI) threads the bilayer. Over 345-406 (SMHQFFSPLS…SDDRVPLLPR (62 aa)) the chain is Cytoplasmic.

It belongs to the nucleotide-sugar transporter family. CMP-Sialate:CMP antiporter (TC 2.A.7.12) subfamily.

The protein resides in the golgi apparatus membrane. Its function is as follows. Sugar transporter involved in the transport of CMP-sialic acid from the cytoplasm into the Golgi. In Arabidopsis thaliana (Mouse-ear cress), this protein is CMP-sialic acid transporter 2.